The following is a 78-amino-acid chain: Translation initiation factor IF-1, chloroplastic (78 aa).

Residues 1 to 72 (MEKQNLIDME…TKGRITYRLR (72 aa)) enclose the S1-like domain.

It belongs to the IF-1 family. Component of the 30S ribosomal translation pre-initiation complex which assembles on the 30S ribosome in the order IF-2 and IF-3, IF-1 and N-formylmethionyl-tRNA(fMet); mRNA recruitment can occur at any time during PIC assembly.

The protein localises to the plastid. The protein resides in the chloroplast. In terms of biological role, one of the essential components for the initiation of protein synthesis. Stabilizes the binding of IF-2 and IF-3 on the 30S subunit to which N-formylmethionyl-tRNA(fMet) subsequently binds. Helps modulate mRNA selection, yielding the 30S pre-initiation complex (PIC). Upon addition of the 50S ribosomal subunit IF-1, IF-2 and IF-3 are released leaving the mature 70S translation initiation complex. This Anthoceros angustus (Hornwort) protein is Translation initiation factor IF-1, chloroplastic.